Consider the following 342-residue polypeptide: MQNEYSQFEQRKRDHIELALMPANQSSELNPFDHFSLVHEALPDLDFKDISIQSIRFKKPVEKPFIISSMTAGHSNALEINYRLMEACSKTKWAMGVGSQRRELTDKQAAFEWTPLRRDFPMVSLFSNLGIAQLIDTPISAIQRLIDTLQAEALIIHCNPLQECIQPEGTTNFQGCWTALEALVKKIASPVIIKETGCGFSKNTLLRLNNIGVAAVEISGVGGTHWGRIEGHRANKDPIRQRTADTFRNWGIDTLQSTRNAISLNPSFEIWGSGGVRNGLDAAKLFALGATTVGFAKPMLEAALGSTGQVLTQMNTIEYELKTAMFCTGSRVLDDLKEKACP.

A substrate-binding site is contributed by Arg11–Lys12. Residues Ser68, Ser69–Thr71, Ser99, and Asn128 each bind FMN. Residue Ser99–Arg101 participates in substrate binding. Gln162 contributes to the substrate binding site. Glu163 contacts Mg(2+). FMN is bound by residues Lys194, Ser219, Thr224, Gly275–Arg277, and Ala296–Lys297.

It belongs to the IPP isomerase type 2 family. In terms of assembly, homooctamer. Dimer of tetramers. The cofactor is FMN. Requires NADPH as cofactor. Mg(2+) is required as a cofactor.

The protein localises to the cytoplasm. It catalyses the reaction isopentenyl diphosphate = dimethylallyl diphosphate. Involved in the biosynthesis of isoprenoids. Catalyzes the 1,3-allylic rearrangement of the homoallylic substrate isopentenyl (IPP) to its allylic isomer, dimethylallyl diphosphate (DMAPP). This Legionella pneumophila subsp. pneumophila (strain Philadelphia 1 / ATCC 33152 / DSM 7513) protein is Isopentenyl-diphosphate delta-isomerase.